The following is a 390-amino-acid chain: Digeranylgeranylglycerophospholipid reductase (390 aa).

FAD-binding residues include alanine 18, glutamate 37, cysteine 48, alanine 49, alanine 51, arginine 98, valine 122, aspartate 278, glycine 290, and isoleucine 291. Valine 368 contacts a 2,3-bis-O-(geranylgeranyl)-sn-glycerol 1-phospholipid.

Belongs to the geranylgeranyl reductase family. DGGGPL reductase subfamily. It depends on FAD as a cofactor.

The catalysed reaction is a 2,3-bis-O-phytanyl-sn-glycerol 1-phospholipid + 8 A = a 2,3-bis-O-(geranylgeranyl)-sn-glycerol 1-phospholipid + 8 AH2. It carries out the reaction 2,3-bis-O-(phytanyl)-sn-glycerol 1-phosphate + 8 A = 2,3-bis-O-(geranylgeranyl)-sn-glycerol 1-phosphate + 8 AH2. It catalyses the reaction CDP-2,3-bis-O-(geranylgeranyl)-sn-glycerol + 8 AH2 = CDP-2,3-bis-O-(phytanyl)-sn-glycerol + 8 A. The enzyme catalyses archaetidylserine + 8 AH2 = 2,3-bis-O-phytanyl-sn-glycero-3-phospho-L-serine + 8 A. The protein operates within membrane lipid metabolism; glycerophospholipid metabolism. Its function is as follows. Is involved in the reduction of 2,3-digeranylgeranylglycerophospholipids (unsaturated archaeols) into 2,3-diphytanylglycerophospholipids (saturated archaeols) in the biosynthesis of archaeal membrane lipids. Catalyzes the formation of archaetidic acid (2,3-di-O-phytanyl-sn-glyceryl phosphate) from 2,3-di-O-geranylgeranylglyceryl phosphate (DGGGP) via the hydrogenation of each double bond of the isoprenoid chains. Is also probably able to reduce double bonds of geranyl groups in CDP-2,3-bis-O-(geranylgeranyl)-sn-glycerol and archaetidylserine, thus acting at various stages in the biosynthesis of archaeal membrane lipids. This Methanococcus maripaludis (strain C7 / ATCC BAA-1331) protein is Digeranylgeranylglycerophospholipid reductase.